The sequence spans 598 residues: MAAAPWLYLSRRRSSTQTSLRRFLICSSSFDADEFISSQSRVIGGRGEEEVRFSGALFSRMIHSSTYHPYRQIPLPHSVQLLDASLGCRGFSSGSSNVSDGCDEEVESECDNDEETGVSCVESSTNPEEVERVCKVIDELFALDRNMEAVLDEMKLDLSHDLIVEVLERFRHARKPAFRFFCWAAERQGFAHDSRTYNSMMSILAKTRQFETMVSVLEEMGTKGLLTMETFTIAMKAFAAAKERKKAVGIFELMKKYKFKIGVETINCLLDSLGRAKLGKEAQVLFDKLKERFTPNMMTYTVLLNGWCRVRNLIEAARIWNDMIDHGLKPDIVAHNVMLEGLLRSMKKSDAIKLFHVMKSKGPCPNVRSYTIMIRDFCKQSSMETAIEYFDDMVDSGLQPDAAVYTCLITGFGTQKKLDTVYELLKEMQEKGHPPDGKTYNALIKLMANQKMPEHGTRIYNKMIQNEIEPSIHTFNMIMKSYFVARNYEMGRAVWDEMIKKGICPDDNSYTVLIRGLISEGKSREACRYLEEMLDKGMKTPLIDYNKFAADFHRGGQPEIFEELAQRAKFSGKFAAAEIFARWAQMTRRRCKQRFMED.

The N-terminal 98 residues, 1 to 98 (MAAAPWLYLS…RGFSSGSSNV (98 aa)), are a transit peptide targeting the mitochondrion. PPR repeat units follow at residues 193-227 (DSRTYNSMMSILAKTRQFETMVSVLEEMGTKGLLT), 229-261 (ETFTIAMKAFAAAKERKKAVGIFELMKKYKFKI), 262-292 (GVETINCLLDSLGRAKLGKEAQVLFDKLKER), 296-330 (NMMTYTVLLNGWCRVRNLIEAARIWNDMIDHGLKP), 331-365 (DIVAHNVMLEGLLRSMKKSDAIKLFHVMKSKGPCP), 366-400 (NVRSYTIMIRDFCKQSSMETAIEYFDDMVDSGLQP), 401-435 (DAAVYTCLITGFGTQKKLDTVYELLKEMQEKGHPP), 436-470 (DGKTYNALIKLMANQKMPEHGTRIYNKMIQNEIEP), 471-505 (SIHTFNMIMKSYFVARNYEMGRAVWDEMIKKGICP), and 506-540 (DDNSYTVLIRGLISEGKSREACRYLEEMLDKGMKT).

It belongs to the PPR family. P subfamily.

It is found in the mitochondrion. This Arabidopsis thaliana (Mouse-ear cress) protein is Pentatricopeptide repeat-containing protein At5g14820, mitochondrial.